We begin with the raw amino-acid sequence, 595 residues long: Glutamyl-tRNA(Gln) amidotransferase subunit B, mitochondrial (595 aa).

The transit peptide at 1 to 72 (MPRLWYSRYL…RAKSQSRNGR (72 aa)) directs the protein to the mitochondrion.

This sequence belongs to the GatB/GatE family. GatB subfamily. As to quaternary structure, subunit of the heterotrimeric GatCAB amidotransferase (AdT) complex, composed of A, B and C subunits.

It localises to the mitochondrion. It catalyses the reaction L-glutamyl-tRNA(Gln) + L-glutamine + ATP + H2O = L-glutaminyl-tRNA(Gln) + L-glutamate + ADP + phosphate + H(+). Allows the formation of correctly charged Gln-tRNA(Gln) through the transamidation of misacylated Glu-tRNA(Gln) in the mitochondria. The reaction takes place in the presence of glutamine and ATP through an activated gamma-phospho-Glu-tRNA(Gln). This chain is Glutamyl-tRNA(Gln) amidotransferase subunit B, mitochondrial, found in Talaromyces marneffei (strain ATCC 18224 / CBS 334.59 / QM 7333) (Penicillium marneffei).